The chain runs to 98 residues: Putative pterin-4-alpha-carbinolamine dehydratase (98 aa).

It belongs to the pterin-4-alpha-carbinolamine dehydratase family.

It catalyses the reaction (4aS,6R)-4a-hydroxy-L-erythro-5,6,7,8-tetrahydrobiopterin = (6R)-L-erythro-6,7-dihydrobiopterin + H2O. This Parasynechococcus marenigrum (strain WH8102) protein is Putative pterin-4-alpha-carbinolamine dehydratase.